The following is a 265-amino-acid chain: Novel plant SNARE 12 (265 aa).

At 1–217 the chain is on the cytoplasmic side; sequence MASELPMSPH…IGRQVATDKC (217 aa). Residues 32-106 are a coiled coil; the sequence is LDKIKDSSRQ…ALRKTYLNTL (75 aa). S74 is modified (phosphoserine). The region spanning 146 to 208 is the t-SNARE coiled-coil homology domain; it reads MKRMDETDQA…KKASQLVKEI (63 aa). A helical; Anchor for type IV membrane protein membrane pass occupies residues 218–238; that stretch reads IMAFLFLIVCGVIAIIIVKIV. The Vesicular portion of the chain corresponds to 239-265; it reads NPNNKDIRDIPGLAPPAQSRKLLYFRE.

Belongs to the novel plant SNARE family. As to expression, expressed in roots, stems, flower, siliques and leaves.

Its subcellular location is the membrane. In terms of biological role, vesicle trafficking protein that functions in the secretory pathway. The sequence is that of Novel plant SNARE 12 (NPSN12) from Arabidopsis thaliana (Mouse-ear cress).